An 86-amino-acid chain; its full sequence is RNA-binding protein Hfq (86 aa).

Residues 9-68 (DPYLNTLRKEKVPVSIYLVNGIKLQGSIESFDQFVVLLKNTVSQMVYKHAISTVVPARPV) enclose the Sm domain. Residues 66 to 86 (RPVRLPSPTDSEHGDSEPGNA) are disordered. Basic and acidic residues predominate over residues 75 to 86 (DSEHGDSEPGNA).

It belongs to the Hfq family. Homohexamer.

RNA chaperone that binds small regulatory RNA (sRNAs) and mRNAs to facilitate mRNA translational regulation in response to envelope stress, environmental stress and changes in metabolite concentrations. Also binds with high specificity to tRNAs. The protein is RNA-binding protein Hfq of Pseudomonas putida (strain ATCC 700007 / DSM 6899 / JCM 31910 / BCRC 17059 / LMG 24140 / F1).